Reading from the N-terminus, the 388-residue chain is Succinate--CoA ligase [ADP-forming] subunit beta (388 aa).

Positions 9-244 (KQLFAEYGLP…PSQDDAREAH (236 aa)) constitute an ATP-grasp domain. ATP contacts are provided by residues Lys46, 53–55 (GRG), Glu99, Thr102, and Glu107. Residues Asn199 and Asp213 each contribute to the Mg(2+) site. Substrate-binding positions include Asn264 and 321–323 (GIV).

This sequence belongs to the succinate/malate CoA ligase beta subunit family. Heterotetramer of two alpha and two beta subunits. Mg(2+) is required as a cofactor.

It catalyses the reaction succinate + ATP + CoA = succinyl-CoA + ADP + phosphate. The enzyme catalyses GTP + succinate + CoA = succinyl-CoA + GDP + phosphate. The protein operates within carbohydrate metabolism; tricarboxylic acid cycle; succinate from succinyl-CoA (ligase route): step 1/1. In terms of biological role, succinyl-CoA synthetase functions in the citric acid cycle (TCA), coupling the hydrolysis of succinyl-CoA to the synthesis of either ATP or GTP and thus represents the only step of substrate-level phosphorylation in the TCA. The beta subunit provides nucleotide specificity of the enzyme and binds the substrate succinate, while the binding sites for coenzyme A and phosphate are found in the alpha subunit. The chain is Succinate--CoA ligase [ADP-forming] subunit beta from Pseudomonas aeruginosa (strain UCBPP-PA14).